Reading from the N-terminus, the 384-residue chain is Carbamoyl phosphate synthase small chain (384 aa).

A CPSase region spans residues 1 to 192; the sequence is MPIAAAKPAL…FGPVAEQQGQ (192 aa). L-glutamine-binding residues include serine 51, glycine 244, and glycine 246. The Glutamine amidotransferase type-1 domain occupies 196–381; sequence TVVALDFGVK…VKLMRQQKAE (186 aa). Cysteine 272 serves as the catalytic Nucleophile. L-glutamine contacts are provided by methionine 273, glutamine 276, asparagine 312, glycine 314, and phenylalanine 315. Residues histidine 354 and glutamate 356 contribute to the active site.

It belongs to the CarA family. In terms of assembly, composed of two chains; the small (or glutamine) chain promotes the hydrolysis of glutamine to ammonia, which is used by the large (or ammonia) chain to synthesize carbamoyl phosphate. Tetramer of heterodimers (alpha,beta)4.

It carries out the reaction hydrogencarbonate + L-glutamine + 2 ATP + H2O = carbamoyl phosphate + L-glutamate + 2 ADP + phosphate + 2 H(+). It catalyses the reaction L-glutamine + H2O = L-glutamate + NH4(+). The protein operates within amino-acid biosynthesis; L-arginine biosynthesis; carbamoyl phosphate from bicarbonate: step 1/1. It functions in the pathway pyrimidine metabolism; UMP biosynthesis via de novo pathway; (S)-dihydroorotate from bicarbonate: step 1/3. In terms of biological role, small subunit of the glutamine-dependent carbamoyl phosphate synthetase (CPSase). CPSase catalyzes the formation of carbamoyl phosphate from the ammonia moiety of glutamine, carbonate, and phosphate donated by ATP, constituting the first step of 2 biosynthetic pathways, one leading to arginine and/or urea and the other to pyrimidine nucleotides. The small subunit (glutamine amidotransferase) binds and cleaves glutamine to supply the large subunit with the substrate ammonia. The protein is Carbamoyl phosphate synthase small chain of Synechocystis sp. (strain ATCC 27184 / PCC 6803 / Kazusa).